The chain runs to 176 residues: Large ribosomal subunit protein uL10 (176 aa).

This sequence belongs to the universal ribosomal protein uL10 family. In terms of assembly, part of the ribosomal stalk of the 50S ribosomal subunit. The N-terminus interacts with L11 and the large rRNA to form the base of the stalk. The C-terminus forms an elongated spine to which L12 dimers bind in a sequential fashion forming a multimeric L10(L12)X complex.

In terms of biological role, forms part of the ribosomal stalk, playing a central role in the interaction of the ribosome with GTP-bound translation factors. This chain is Large ribosomal subunit protein uL10, found in Teredinibacter turnerae (strain ATCC 39867 / T7901).